A 211-amino-acid polypeptide reads, in one-letter code: Synaptosomal-associated protein 23 (211 aa).

N-acetylmethionine is present on methionine 1. Phosphoserine occurs at positions 5, 6, 20, 23, and 34. A t-SNARE coiled-coil homology 1 domain is found at 14–76 (HQITDESLES…RETEKTLTEL (63 aa)). A coiled-coil region spans residues 23–76 (STRRILGLAIESQDAGIKTITMLDEQKEQLNRIEEGLDQINKDMRETEKTLTEL). S-palmitoyl cysteine attachment occurs at residues cysteine 79, cysteine 80, cysteine 83, cysteine 85, and cysteine 87. Serine 110 bears the Phosphoserine mark. Residue cysteine 112 is the site of S-palmitoyl cysteine attachment. The region spanning 146-208 (DAREDEMEEN…DIANARAKKL (63 aa)) is the t-SNARE coiled-coil homology 2 domain. Phosphoserine is present on serine 161.

It belongs to the SNAP-25 family. Homotetramer (via coiled-coil domain), also forms heterotetramers with STX4 and VAMP3. Found in a complex with VAMP8 and STX1A. Found in a complex with VAMP8 and STX4 in pancreas. Interacts simultaneously with SNAPIN and SYN4. Interacts with STX1A. Interacts with STX12. Interacts tightly to multiple syntaxins and synaptobrevins/VAMPs. Interacts with ZDHHC13 (via ANK repeats). Interacts with ZDHHC17 (via ANK repeats). Ubiquitous. Highest levels where found in placenta.

It is found in the cell membrane. Its subcellular location is the synapse. The protein localises to the synaptosome. In terms of biological role, essential component of the high affinity receptor for the general membrane fusion machinery and an important regulator of transport vesicle docking and fusion. This Homo sapiens (Human) protein is Synaptosomal-associated protein 23 (SNAP23).